The sequence spans 285 residues: Ribosomal RNA small subunit methyltransferase I (285 aa).

Belongs to the methyltransferase superfamily. RsmI family.

The protein localises to the cytoplasm. The enzyme catalyses cytidine(1402) in 16S rRNA + S-adenosyl-L-methionine = 2'-O-methylcytidine(1402) in 16S rRNA + S-adenosyl-L-homocysteine + H(+). Its function is as follows. Catalyzes the 2'-O-methylation of the ribose of cytidine 1402 (C1402) in 16S rRNA. This is Ribosomal RNA small subunit methyltransferase I from Buchnera aphidicola subsp. Schizaphis graminum (strain Sg).